Reading from the N-terminus, the 301-residue chain is Transposase InsD for insertion element IS2D (301 aa).

The Integrase catalytic domain occupies 106 to 289 (KPAVPPSKRA…SPREYLRQRA (184 aa)).

Its function is as follows. Involved in the transposition of the insertion sequence IS2. The polypeptide is Transposase InsD for insertion element IS2D (insD2) (Escherichia coli (strain K12)).